The sequence spans 908 residues: SH3 and PX domain-containing protein 2B (908 aa).

Positions 5 to 129 (RSIVEVKVLD…QFFETRPEDL (125 aa)) constitute a PX domain. Phosphotyrosine is present on Tyr25. 2 SH3 domains span residues 152–211 (MVLE…GQDG) and 221–280 (EEEE…KNSG). A phosphoserine mark is found at Ser279 and Ser291. Disordered stretches follow at residues 280 to 300 (GEPL…ALDL) and 315 to 366 (ELLN…PPIP). The span at 315-337 (ELLNNQRDGRFEGRLVPDGDVKQ) shows a compositional bias: basic and acidic residues. Over residues 338-347 (RSPKMRQRPP) the composition is skewed to basic residues. Residues 368–427 (QVEEEYYTIAEFQTTIPDGISFQAGLKVEVIEKSLSGWWYIQMEDKEGWAPATFIDKYKK) form the SH3 3 domain. The tract at residues 455–832 (TENNTGPEAV…LGPRVTGKVG (378 aa)) is disordered. 5 stretches are compositionally biased toward basic and acidic residues: residues 486 to 499 (KDWK…RKAS), 516 to 546 (QEEK…KMEP), 569 to 584 (LARD…DKSK), 595 to 606 (CGHKVLAKEVKK), and 615 to 625 (SKAELSEEKVD). A phosphoserine mark is found at Ser499 and Ser528. Tyr661 is modified (phosphotyrosine). The span at 671-684 (KSQEKALLDGESHH) shows a compositional bias: basic and acidic residues. Residues 754–764 (VVPPRRPPPPK) show a composition bias toward pro residues. Residue Ser840 is modified to Phosphoserine. The SH3 4 domain occupies 847-908 (PKDSLYVAVA…IPSNYLRKKP (62 aa)).

This sequence belongs to the SH3PXD2 family. Interacts with NOXO1. Interacts (via SH3 domains) with NOXA1; the interaction is direct. Interacts with ADAM15. Interacts with FASLG. Phosphorylated in SRC-transformed cells. In terms of tissue distribution, highly expressed in the stromal-vascular fraction of white adipose tissue with moderate expression in heart, skeletal muscle and the mature adipocyte fraction of white adipose tissue. Also expressed in brain, spleen, kidney and liver. Expressed in white and brown adipose tissues, eye, lung, heart, brain, spleen, stomach, liver and skeletal muscle (at protein level). Not expressed in kidney or bone marrow.

Its subcellular location is the cytoplasm. The protein resides in the cell projection. It is found in the podosome. Its function is as follows. Adapter protein involved in invadopodia and podosome formation and extracellular matrix degradation. Binds matrix metalloproteinases (ADAMs), NADPH oxidases (NOXs) and phosphoinositides. Acts as an organizer protein that allows NOX1- or NOX3-dependent reactive oxygen species (ROS) generation and ROS localization. Plays a role in mitotic clonal expansion during the immediate early stage of adipocyte differentiation. This Mus musculus (Mouse) protein is SH3 and PX domain-containing protein 2B (Sh3pxd2b).